The chain runs to 217 residues: Vesicle transport through interaction with t-SNAREs homolog 1A (217 aa).

Residues 1-192 (MDVFERTEQN…TGIARRLATN (192 aa)) are Cytoplasmic-facing. A coiled-coil region spans residues 36 to 97 (AVREVENDID…AQLQSSNQTN (62 aa)). Residues 90–109 (LQSSNQTNSNPWSNAPDDYQ) are disordered. The 63-residue stretch at 123–185 (SNMLDSTSDR…KSARKIMTGI (63 aa)) folds into the t-SNARE coiled-coil homology domain. A helical; Anchor for type IV membrane protein transmembrane segment spans residues 193 to 213 (KVILSIIILLLMGIIALIICL). Residues 214 to 217 (KWLR) lie on the Vesicular side of the membrane.

Belongs to the VTI1 family. Component of the SNARE complex composed of syn7A, syn8A, vamp7A and vti1A.

It localises to the membrane. The protein resides in the cytoplasmic vesicle. The protein localises to the secretory vesicle membrane. Its subcellular location is the clathrin-coated vesicle membrane. It is found in the endosome membrane. It localises to the endoplasmic reticulum membrane. Its function is as follows. V-SNARE that mediates vesicle transport pathways through interactions with t-SNAREs on the target membrane. These interactions are proposed to mediate aspects of the specificity of vesicle trafficking and to promote fusion of the lipid bilayers. This chain is Vesicle transport through interaction with t-SNAREs homolog 1A, found in Dictyostelium discoideum (Social amoeba).